The chain runs to 380 residues: cAMP-dependent protein kinase type I-alpha regulatory subunit (380 aa).

Met1 carries the post-translational modification N-acetylmethionine. Ala2 carries the post-translational modification N-acetylalanine; in cAMP-dependent protein kinase type I-alpha regulatory subunit, N-terminally processed. The interval 2–135 is dimerization and phosphorylation; that stretch reads ASGSTASEEE…ALAKAIEKNV (134 aa). Phosphoserine occurs at positions 3, 76, and 82. The segment at 64 to 96 is disordered; that stretch reads IQNLQKASARADSREDEISPPPPNPVVKGRRRR. Residues 95–99 carry the Pseudophosphorylation motif motif; it reads RRGAI. A Phosphoserine modification is found at Ser100. Residues 136-253, Glu201, Arg210, 254-380, Glu325, and Arg334 contribute to the 3',5'-cyclic AMP site; these read LFSH…SKVS and ILES…SLSV. The residue at position 257 (Ser257) is a Phosphoserine.

It belongs to the cAMP-dependent kinase regulatory chain family. The inactive holoenzyme is composed of two regulatory chains and two catalytic chains. Activation by cAMP releases the two active catalytic monomers and the regulatory dimer. Interacts with PRKACA and PRKACB. PRKAR1A also interacts with RFC2; the complex may be involved in cell survival. Interacts with AKAP4. Interacts with RARA; the interaction occurs in the presence of cAMP or FSH and regulates RARA transcriptional activity. Interacts with the phosphorylated form of PJA2. Interacts with CBFA2T3. Interacts with PRKX; regulates this cAMP-dependent protein kinase. Interacts with smAKAP; this interaction may target PRKAR1A to the plasma membrane. Interacts with AICDA. In terms of processing, the pseudophosphorylation site binds to the substrate-binding region of the catalytic chain, resulting in the inhibition of its activity. In terms of tissue distribution, four types of regulatory chains are found: I-alpha, I-beta, II-alpha, and II-beta. Their expression varies among tissues and is in some cases constitutive and in others inducible.

Its subcellular location is the cell membrane. Its function is as follows. Regulatory subunit of the cAMP-dependent protein kinases involved in cAMP signaling in cells. The chain is cAMP-dependent protein kinase type I-alpha regulatory subunit (PRKAR1A) from Sus scrofa (Pig).